Reading from the N-terminus, the 49-residue chain is Large ribosomal subunit protein bL33A (49 aa).

It belongs to the bacterial ribosomal protein bL33 family.

This chain is Large ribosomal subunit protein bL33A, found in Latilactobacillus sakei subsp. sakei (strain 23K) (Lactobacillus sakei subsp. sakei).